A 413-amino-acid polypeptide reads, in one-letter code: Protein LAZY 1 (413 aa).

A helical membrane pass occupies residues 71 to 91 (FTFGGSGLLTIGTLGIAAVAV). Acidic residues predominate over residues 103–124 (DADADSDFDDNDDTAGDDEDQV). 2 disordered regions span residues 103-127 (DADA…VDSA) and 261-308 (EDGG…ASAT). 2 short sequence motifs (nuclear localization signal) span residues 275–298 (RKAG…EKVP) and 338–345 (KKSRKRGS).

This sequence belongs to the LAZY family. As to expression, expressed in the node of the stem, initiating leaf founder cells, young leaf primordia, tips of axillary meristems, spikelet pair meristems of developing tassels and ears, male flower primordia, tassels, ears, silks and seeds. Expressed in leaf sheaths, leaf pulvinus and shoot apical meristem (SAM).

Its subcellular location is the cell membrane. The protein localises to the nucleus. Functionally, involved in the regulation of shoot gravitropism, and tassel and ear development through the regulation of polar auxin transport (PAT) and auxin signaling. Acts as a negative regulator of basipetal PAT, but positive regulator of lateral auxin transport. Involved in the regulation of shoot gravitropism and leaf angle through the regulation of cell development. This is Protein LAZY 1 from Zea mays (Maize).